Here is a 283-residue protein sequence, read N- to C-terminus: Thymidylate synthase (283 aa).

Arg-22 contributes to the dUMP binding site. Cys-160 serves as the catalytic Nucleophile. Residues 180–183 (RSCD), Asn-191, and 221–223 (HIY) contribute to the dUMP site. Position 183 (Asp-183) interacts with (6R)-5,10-methylene-5,6,7,8-tetrahydrofolate. A (6R)-5,10-methylene-5,6,7,8-tetrahydrofolate-binding site is contributed by Ser-282.

It belongs to the thymidylate synthase family. Bacterial-type ThyA subfamily. Homodimer.

It localises to the cytoplasm. It carries out the reaction dUMP + (6R)-5,10-methylene-5,6,7,8-tetrahydrofolate = 7,8-dihydrofolate + dTMP. It participates in pyrimidine metabolism; dTTP biosynthesis. Catalyzes the reductive methylation of 2'-deoxyuridine-5'-monophosphate (dUMP) to 2'-deoxythymidine-5'-monophosphate (dTMP) while utilizing 5,10-methylenetetrahydrofolate (mTHF) as the methyl donor and reductant in the reaction, yielding dihydrofolate (DHF) as a by-product. This enzymatic reaction provides an intracellular de novo source of dTMP, an essential precursor for DNA biosynthesis. This chain is Thymidylate synthase, found in Photobacterium profundum (strain SS9).